We begin with the raw amino-acid sequence, 93 residues long: Small ribosomal subunit protein uS19 (93 aa).

This sequence belongs to the universal ribosomal protein uS19 family.

Its function is as follows. Protein S19 forms a complex with S13 that binds strongly to the 16S ribosomal RNA. The chain is Small ribosomal subunit protein uS19 from Kocuria rhizophila (strain ATCC 9341 / DSM 348 / NBRC 103217 / DC2201).